A 78-amino-acid polypeptide reads, in one-letter code: Protein SlyX homolog (78 aa).

The protein belongs to the SlyX family.

The polypeptide is Protein SlyX homolog (Photobacterium profundum (strain SS9)).